The chain runs to 492 residues: Catalase isozyme 2 (492 aa).

Catalysis depends on residues His65 and Asn138. Tyr348 serves as a coordination point for heme.

It belongs to the catalase family. As to quaternary structure, homotetramer. The cofactor is heme.

Its subcellular location is the peroxisome. The catalysed reaction is 2 H2O2 = O2 + 2 H2O. Occurs in almost all aerobically respiring organisms and serves to protect cells from the toxic effects of hydrogen peroxide. In Nicotiana plumbaginifolia (Leadwort-leaved tobacco), this protein is Catalase isozyme 2 (CAT2).